Consider the following 185-residue polypeptide: Ribosome-recycling factor (185 aa).

It belongs to the RRF family.

The protein resides in the cytoplasm. In terms of biological role, responsible for the release of ribosomes from messenger RNA at the termination of protein biosynthesis. May increase the efficiency of translation by recycling ribosomes from one round of translation to another. This is Ribosome-recycling factor from Pectobacterium atrosepticum (strain SCRI 1043 / ATCC BAA-672) (Erwinia carotovora subsp. atroseptica).